We begin with the raw amino-acid sequence, 545 residues long: DNA-binding protein REPIN1 (545 aa).

The disordered stretch occupies residues 1-50; that stretch reads MLEQRCRGPTAMGPAQPWLFSGPSQESSQPDRGLRYQGKSAQPRGQTPGK. Phosphoserine is present on Ser27. The residue at position 39 (Lys39) is an N6-acetyllysine. The C2H2-type 1; atypical zinc-finger motif lies at 52-74; sequence HRCAHCRKRFPGWVALWLHARRC. 2 C2H2-type zinc fingers span residues 80-102 and 111-133; these read LPCHECNQRFRHAPFLALHLQVH and FICHLCGHSFRGWVALVLHLRAH. The segment at 140–162 adopts a C2H2-type 4; atypical zinc-finger fold; it reads ITCPECDRRFWRQKQLRAHLRRC. C2H2-type zinc fingers lie at residues 172-194, 229-251, 257-279, 285-307, 353-375, 381-403, 409-431, 437-459, 465-487, 493-515, and 521-543; these read FICGNCGRSFAQWDQLVVHKRVH, FQCACCGKRFRHKPNLIAHRRVH, HQCPECGKRFTNKPYLTSHRRIH, YPCTECGRRFRHKPNLLSHSKIH, HSCSDCGRSFRLERFLRLHQRQH, FACTECGKNFGKKTHLVAHSRVH, FACEECGRRFSQGSHLAAHRRDH, FVCPDCGKAFRHKPYLAAHRRIH, YVCPDCGKAFSQKSNLVSHRRIH, YACPDCDRSFSQKSNLITHRKSH, and FCCAICGQTFDDEDRLLMHQKKH. Lys269 carries the post-translational modification N6-acetyllysine.

Homodimers and homomultimers. Found in a complex with RIP60 and RIP100.

Its subcellular location is the nucleus. The protein localises to the cytoplasm. It localises to the cytosol. Sequence-specific double-stranded DNA-binding protein. Binds ATT-rich and T-rich DNA sequences and facilitates DNA bending. May regulate the expression of genes involved in cellular fatty acid import, including SCARB1/CD36, and genes involved in lipid droplet formation. May regulate the expression of LCN2, and thereby influence iron metabolism and apoptosis-related pathways. May regulate the expression of genes involved in glucose transport. This is DNA-binding protein REPIN1 (Repin1) from Mus musculus (Mouse).